The primary structure comprises 157 residues: uncharacterized protein (157 aa).

An N-terminal signal peptide occupies residues 1 to 28; that stretch reads MKRLFMKASLVLFAVVFVFAVKGAPAKA.

This is an uncharacterized protein from Bacillus subtilis (strain 168).